Reading from the N-terminus, the 1050-residue chain is Sentrin-specific protease 7 (1050 aa).

3 disordered regions span residues 1-28 (MDKRKLGRRPSSSEIITEGKRKKSSSDL), 183-288 (PPVT…DVKY), and 304-365 (RRLR…KSDF). A phosphoserine mark is found at S11, S12, S13, and S25. Low complexity predominate over residues 196 to 211 (LQSEQLSSSSDGSLES). The segment covering 259 to 271 (ISDTQPEDLNSGS) has biased composition (polar residues). Residues 273 to 288 (GCDHLEQESRNKDVKY) show a composition bias toward basic and acidic residues. The span at 310 to 320 (LPDSQYCTSLD) shows a compositional bias: polar residues. Basic and acidic residues-rich tracts occupy residues 321-331 (KSTEQTKKQED) and 338-365 (EFEKPSENYHQDPKLPEEITTKPTKSDF). Phosphoserine is present on residues S373, S433, S443, and S444. The tract at residues 443–476 (SSDEEGPVEHKSSEILKLQSKQDRETTNENESTS) is disordered. The span at 449 to 469 (PVEHKSSEILKLQSKQDRETT) shows a compositional bias: basic and acidic residues. Residues 760–1050 (LGVTNEDLEC…HLQQQKGSSS (291 aa)) are protease. Catalysis depends on residues H860 and D939. C992 acts as the Nucleophile in catalysis.

It belongs to the peptidase C48 family.

Its subcellular location is the cytoplasm. Its function is as follows. Protease that acts as a positive regulator of the cGAS-STING pathway by catalyzing desumoylation of CGAS. Desumoylation of CGAS promotes DNA-binding activity of CGAS, subsequent oligomerization and activation. Deconjugates SUMO2 and SUMO3 from targeted proteins, but not SUMO1. Catalyzes the deconjugation of poly-SUMO2 and poly-SUMO3 chains. Has very low efficiency in processing full-length SUMO proteins to their mature forms. The chain is Sentrin-specific protease 7 from Homo sapiens (Human).